We begin with the raw amino-acid sequence, 121 residues long: Large ribosomal subunit protein bL19 (121 aa).

It belongs to the bacterial ribosomal protein bL19 family.

Functionally, this protein is located at the 30S-50S ribosomal subunit interface and may play a role in the structure and function of the aminoacyl-tRNA binding site. The sequence is that of Large ribosomal subunit protein bL19 from Chlamydia caviae (strain ATCC VR-813 / DSM 19441 / 03DC25 / GPIC) (Chlamydophila caviae).